Consider the following 395-residue polypeptide: Elongation factor Tu (395 aa).

A tr-type G domain is found at Lys10–Gln204. Positions Gly19–Thr26 are G1. Residue Gly19–Thr26 participates in GTP binding. A Mg(2+)-binding site is contributed by Thr26. The tract at residues Gly60–Ser64 is G2. The tract at residues Asp81–Gly84 is G3. Residues Asp81–His85 and Asn136–Asp139 contribute to the GTP site. A G4 region spans residues Asn136 to Asp139. Residues Ser174 to Leu176 are G5.

The protein belongs to the TRAFAC class translation factor GTPase superfamily. Classic translation factor GTPase family. EF-Tu/EF-1A subfamily. Monomer.

The protein localises to the cytoplasm. The enzyme catalyses GTP + H2O = GDP + phosphate + H(+). Functionally, GTP hydrolase that promotes the GTP-dependent binding of aminoacyl-tRNA to the A-site of ribosomes during protein biosynthesis. This is Elongation factor Tu from Geobacillus kaustophilus (strain HTA426).